The following is a 192-amino-acid chain: Phosphoheptose isomerase (192 aa).

An SIS domain is found at 37–192 (ITDSFKNGGK…MMLIEFEMAK (156 aa)). 52-54 (NGG) lines the substrate pocket. Residues His-61 and Glu-65 each coordinate Zn(2+). Substrate-binding positions include Glu-65, 93–94 (ND), 119–121 (STS), Ser-124, and Gln-172. Zn(2+) is bound by residues Gln-172 and His-180.

It belongs to the SIS family. GmhA subfamily. Homotetramer. It depends on Zn(2+) as a cofactor.

The protein localises to the cytoplasm. The catalysed reaction is 2 D-sedoheptulose 7-phosphate = D-glycero-alpha-D-manno-heptose 7-phosphate + D-glycero-beta-D-manno-heptose 7-phosphate. It functions in the pathway carbohydrate biosynthesis; D-glycero-D-manno-heptose 7-phosphate biosynthesis; D-glycero-alpha-D-manno-heptose 7-phosphate and D-glycero-beta-D-manno-heptose 7-phosphate from sedoheptulose 7-phosphate: step 1/1. Functionally, catalyzes the isomerization of sedoheptulose 7-phosphate in D-glycero-D-manno-heptose 7-phosphate. The polypeptide is Phosphoheptose isomerase (Glaesserella parasuis serovar 5 (strain SH0165) (Haemophilus parasuis)).